The chain runs to 510 residues: Histidine ammonia-lyase (510 aa).

Positions 143-145 form a cross-link, 5-imidazolinone (Ala-Gly); sequence ASG. Residue Ser-144 is modified to 2,3-didehydroalanine (Ser).

The protein belongs to the PAL/histidase family. In terms of processing, contains an active site 4-methylidene-imidazol-5-one (MIO), which is formed autocatalytically by cyclization and dehydration of residues Ala-Ser-Gly.

Its subcellular location is the cytoplasm. The catalysed reaction is L-histidine = trans-urocanate + NH4(+). The protein operates within amino-acid degradation; L-histidine degradation into L-glutamate; N-formimidoyl-L-glutamate from L-histidine: step 1/3. In Shewanella sediminis (strain HAW-EB3), this protein is Histidine ammonia-lyase.